We begin with the raw amino-acid sequence, 207 residues long: Large ribosomal subunit protein uL4 (207 aa).

Residues 49–78 are disordered; that stretch reads HAVKNRSAVRGGGRKPWRQKGTGRARQGSI. Residues 60-71 are compositionally biased toward basic residues; sequence GGRKPWRQKGTG.

Belongs to the universal ribosomal protein uL4 family. As to quaternary structure, part of the 50S ribosomal subunit.

In terms of biological role, one of the primary rRNA binding proteins, this protein initially binds near the 5'-end of the 23S rRNA. It is important during the early stages of 50S assembly. It makes multiple contacts with different domains of the 23S rRNA in the assembled 50S subunit and ribosome. Its function is as follows. Forms part of the polypeptide exit tunnel. The chain is Large ribosomal subunit protein uL4 from Latilactobacillus sakei subsp. sakei (strain 23K) (Lactobacillus sakei subsp. sakei).